Reading from the N-terminus, the 172-residue chain is Ribosomally synthesized cyclic peptide phomopsin precursor phomA (172 aa).

The signal sequence occupies residues 1–18 (MRFTPAIVIAAFCSLAVA). 11 consecutive propeptides follow at residues 19–35 (APAAKAIARSPSEAVED), 42–50 (KKRGEAVED), 57–65 (KKRGEAVED), 72–79 (KRGEAVED), 86–93 (KRGEAVED), 100–108 (KKRGEAVED), 115–122 (KRGEAVED), 129–137 (RKRGEAVED), 144–151 (KRGEAVED), 158–165 (KRGEAVED), and lysine 172.

Post-translationally, phomA is processed by several endopeptidases including kexin proteases as well as the cluster-specific S41 family peptidase phomP1 and the oligopeptidase phomG to produce 10 identical copies of the hexapeptide Tyr-Val-Ile-Pro-Ile-Asp, that is further modified to yield phomapsins. The timing and order of proteolysis of the phomA precursor and PTMs are still unknown. Two tyrosinase-like enzymes, phomQ1 and phomQ2, catalyze the chlorination and hydroxylation of Tyr, respectively. PhomYb, is proposed to be involved in the construction of the macrocyclic structure. The other 4 ustYa family proteins may be involved in PTMs that generate the unique structure of phomopsin A. PhomYa is required for the hydroxylation of C-beta of Tyr. PhomYc, phomYd, and phomYe are responsible for the biosynthesis of 2,3-dehydroisoleucine (dIle), 2,3-dehydroaspartic acid (dAsp), and 3,4-dehydroproline (dPro), respectively. While dIle formation by phomYc is indispensable for the installation of dAsp by phomYd, the order of the other PTMs have not been elucidated yet. Most of the biosynthetic enzymes likely have broad substrate specificity, and thus, there might be a metabolic grid from a precursor to phomopsin A. The enzyme(s) responsible for the biosynthesis of 3,4-dehydrovaline (dVal) have also not been identified yet. Finally, phomM acts as an S-adenosylmethionine-dependent alpha-N-methyltransferase that catalyzes two successive N-methylation reactions, converting N-desmethyl-phomopsin A to phomopsin A and phomopsin A further to an N,N-dimethylated congener called phomopsin E.

It functions in the pathway mycotoxin biosynthesis. In terms of biological role, ribosomally synthesized cyclic peptide phomopsin precursor; part of the gene cluster that mediates the biosynthesis of the phomopsins, a group of hexapeptide mycotoxins which infects lupins and causes lupinosis disease in livestock. The phomA translated product contains a 10-fold repeated peptide embedding the hexapeptide Tyr-Val-Ile-Pro-Ile-Asp, that is converted into phomapsins. After being excised from the precursor peptide by kexin proteases, the core peptides are cyclized and modified post-translationally by enzymes encoded within the corresponding gene cluster. This is Ribosomally synthesized cyclic peptide phomopsin precursor phomA from Diaporthe leptostromiformis (Lupinosis disease fungus).